Consider the following 61-residue polypeptide: Disintegrin rubistatin (61 aa).

The Disintegrin domain maps to 1 to 61; sequence NPCCDAATCK…ADCPRNGLYG (61 aa). Disulfide bonds link Cys-3–Cys-26, Cys-17–Cys-23, Cys-22–Cys-47, and Cys-35–Cys-54. The Cell attachment site; atypical (MVD) motif lies at 39–41; sequence MVD.

Belongs to the venom metalloproteinase (M12B) family. P-II subfamily. P-IIa sub-subfamily. In terms of assembly, monomer. Expressed by the venom gland.

The protein localises to the secreted. Recombinant disintegrin rubistatin inhibits ADP-induced platelet aggregation. In addition, it strongly induces apoptosis, and inhibits cell migration and proliferation of the human cancer cell line SK-Mel-28. The protein is Disintegrin rubistatin of Crotalus ruber ruber (Red diamond rattlesnake).